Here is a 476-residue protein sequence, read N- to C-terminus: Probable cytosolic Fe-S cluster assembly factor GI11683 (476 aa).

The [4Fe-4S] cluster site is built by Cys23, Cys68, Cys71, Cys74, Cys187, Cys243, Cys395, and Cys399.

It belongs to the NARF family.

In terms of biological role, component of the cytosolic iron-sulfur (Fe/S) protein assembly machinery. Required for maturation of extramitochondrial Fe/S proteins. This Drosophila mojavensis (Fruit fly) protein is Probable cytosolic Fe-S cluster assembly factor GI11683.